The primary structure comprises 407 residues: POC1 centriolar protein homolog A (407 aa).

WD repeat units lie at residues 17–56 (GHRD…RAYR), 59–98 (GHKD…ESTV), 101–140 (AHTA…FLFS), 143–182 (QHIN…CVHS), 185–224 (EHGG…LLQH), 227–266 (LHSA…LLYT), and 269–308 (GHQG…VDYG). The segment at 317-357 (PATRASSSGTLPEVDPLVPPGRGRSQESMQSHSQEPVSVPQ) is disordered. The segment covering 342–357 (QESMQSHSQEPVSVPQ) has biased composition (polar residues). Residues 369–397 (QLDVLTQTVSILEQRLTLTEDKLKQCLEN) are a coiled coil.

This sequence belongs to the WD repeat POC1 family. Interacts with POC1B.

Its subcellular location is the cytoplasm. The protein localises to the cytoskeleton. It is found in the microtubule organizing center. The protein resides in the centrosome. It localises to the centriole. Its subcellular location is the cilium basal body. The protein localises to the spindle pole. In terms of biological role, plays an important role in centriole assembly and/or stability and ciliogenesis. Involved in early steps of centriole duplication, as well as in the later steps of centriole length control. Acts in concert with POC1B to ensure centriole integrity and proper mitotic spindle formation. In Bos taurus (Bovine), this protein is POC1 centriolar protein homolog A (POC1A).